A 659-amino-acid polypeptide reads, in one-letter code: RNA polymerase II subunit A C-terminal domain phosphatase (659 aa).

Residues 139 to 303 (ITNRKLVLLV…KNSKEQMPVQ (165 aa)) enclose the FCP1 homology domain. The BRCT domain occupies 351–443 (ERHKVLDGCV…LKADENLFQL (93 aa)). Positions 484 to 504 (ALSDDEDDGDNEDEDDDGNDV) are enriched in acidic residues. Positions 484 to 640 (ALSDDEDDGD…PESDDDDEFE (157 aa)) are disordered. The span at 505–519 (GEDKGDENLEEKQEK) shows a compositional bias: basic and acidic residues. Residues 529–538 (QNGSVENQSG) show a composition bias toward polar residues. 3 stretches are compositionally biased toward acidic residues: residues 560–576 (MEDEEEESDSDNEDDDT), 596–607 (ENEDDAVFDVDD), and 616–640 (IDEEEDDEDNEDEEVPESDDDDEFE).

Its subcellular location is the nucleus. The enzyme catalyses O-phospho-L-seryl-[protein] + H2O = L-seryl-[protein] + phosphate. It carries out the reaction O-phospho-L-threonyl-[protein] + H2O = L-threonyl-[protein] + phosphate. Its function is as follows. During the late stages of oogenesis, dephosphorylates 'Ser-5' of the heptad repeats YSPTSPS in the C-terminal domain of the largest RNA polymerase II subunit ama-1. Similarly, dephosphorylates 'Ser-5' of ama-1 in early embryonic cells prior to the activation of the zygotic transcription program at the 4-cell embryonic stage. May dephosphorylate 'Ser-2' of the ama-1 heptad repeats YSPTSPS in embryonic somatic and germline cells. In Caenorhabditis elegans, this protein is RNA polymerase II subunit A C-terminal domain phosphatase.